Here is a 429-residue protein sequence, read N- to C-terminus: Adenylosuccinate synthetase (429 aa).

Residues 12-18 (GDEGKGK) and 40-42 (GHT) contribute to the GTP site. The active-site Proton acceptor is the Asp-13. Asp-13 and Gly-40 together coordinate Mg(2+). Residues 13 to 16 (DEGK), 38 to 41 (NAGH), Thr-128, Arg-142, Gln-223, Thr-238, and Arg-302 contribute to the IMP site. Catalysis depends on His-41, which acts as the Proton donor. 298–304 (TTTGRPR) is a binding site for substrate. GTP contacts are provided by residues Arg-304, 330–332 (SID), and 412–414 (SVG).

Belongs to the adenylosuccinate synthetase family. In terms of assembly, homodimer. The cofactor is Mg(2+).

It localises to the cytoplasm. It carries out the reaction IMP + L-aspartate + GTP = N(6)-(1,2-dicarboxyethyl)-AMP + GDP + phosphate + 2 H(+). Its pathway is purine metabolism; AMP biosynthesis via de novo pathway; AMP from IMP: step 1/2. In terms of biological role, plays an important role in the de novo pathway of purine nucleotide biosynthesis. Catalyzes the first committed step in the biosynthesis of AMP from IMP. The protein is Adenylosuccinate synthetase of Lysinibacillus sphaericus (strain C3-41).